A 103-amino-acid chain; its full sequence is MRRELMKMKINVDKSLIKAVKTGKVIIGANRTVDAAENGSAKMVVLASNCPADIKKKVQETNVPVLEYEGTSVELGPVCGKPFTIAAMAILDAGESDILAATA.

It belongs to the eukaryotic ribosomal protein eL30 family.

The polypeptide is Large ribosomal subunit protein eL30 (Methanosarcina mazei (strain ATCC BAA-159 / DSM 3647 / Goe1 / Go1 / JCM 11833 / OCM 88) (Methanosarcina frisia)).